The chain runs to 134 residues: Small ribosomal subunit protein uS8 (134 aa).

It belongs to the universal ribosomal protein uS8 family. Part of the 30S ribosomal subunit. Contacts proteins S5 and S12.

Functionally, one of the primary rRNA binding proteins, it binds directly to 16S rRNA central domain where it helps coordinate assembly of the platform of the 30S subunit. This Petrotoga mobilis (strain DSM 10674 / SJ95) protein is Small ribosomal subunit protein uS8.